A 280-amino-acid polypeptide reads, in one-letter code: Chorismate mutase (280 aa).

A Chorismate mutase domain is found at 3 to 256; sequence FMKPETVLDL…EVDYLLRRLE (254 aa). Residues R73, R74, N137, G139, and S140 each coordinate L-tyrosine. L-tryptophan is bound by residues N137, G139, and S140.

In terms of assembly, homodimer.

The protein resides in the cytoplasm. It catalyses the reaction chorismate = prephenate. The protein operates within metabolic intermediate biosynthesis; prephenate biosynthesis; prephenate from chorismate: step 1/1. With respect to regulation, each dimer has two allosteric binding sites that can bind the regulatory effectors tryptophan or tyrosine. Can bind either one tryptophan or one tyrosine, two tryptophan or two tyrosine or one tryptophan and one tyrosine, which differentially affect the catalytic activity. Activated by tryptophan and subject to feedback inhibition by tyrosine. In the presence of both tryptophan and tyrosine, the enzyme is in the activated state. Catalyzes the Claisen rearrangement of chorismate to prephenate. Acts at the first branch point in the aromatic amino acid pathway where it steers biosynthesis towards phenylalanine and tyrosine, and away from tryptophan. The protein is Chorismate mutase of Pichia angusta (Yeast).